Consider the following 117-residue polypeptide: Immunoglobulin heavy variable 3-7 (117 aa).

Positions 1-19 (MELGLSWVFLVAILEGVQC) are cleaved as a signal peptide. The segment at 20–44 (EVQLVESGGGLVQPGGSLRLSCAAS) is framework-1. In terms of domain architecture, Ig-like spans 20–117 (EVQLVESGGG…EDTAVYYCAR (98 aa)). C41 and C115 are oxidised to a cystine. The complementarity-determining-1 stretch occupies residues 45-52 (GFTFSSYW). The framework-2 stretch occupies residues 53–69 (MSWVRQAPGKGLEWVAN). Residues 70-77 (IKQDGSEK) form a complementarity-determining-2 region. The segment at 78-115 (YYVDSVKGRFTISRDNAKNSLYLQMNSLRAEDTAVYYC) is framework-3. Positions 116–117 (AR) are complementarity-determining-3.

Immunoglobulins are composed of two identical heavy chains and two identical light chains; disulfide-linked.

The protein localises to the secreted. Its subcellular location is the cell membrane. Functionally, v region of the variable domain of immunoglobulin heavy chains that participates in the antigen recognition. Immunoglobulins, also known as antibodies, are membrane-bound or secreted glycoproteins produced by B lymphocytes. In the recognition phase of humoral immunity, the membrane-bound immunoglobulins serve as receptors which, upon binding of a specific antigen, trigger the clonal expansion and differentiation of B lymphocytes into immunoglobulins-secreting plasma cells. Secreted immunoglobulins mediate the effector phase of humoral immunity, which results in the elimination of bound antigens. The antigen binding site is formed by the variable domain of one heavy chain, together with that of its associated light chain. Thus, each immunoglobulin has two antigen binding sites with remarkable affinity for a particular antigen. The variable domains are assembled by a process called V-(D)-J rearrangement and can then be subjected to somatic hypermutations which, after exposure to antigen and selection, allow affinity maturation for a particular antigen. The protein is Immunoglobulin heavy variable 3-7 of Homo sapiens (Human).